Consider the following 252-residue polypeptide: MKMTNNTVLITGGSAGIGLELAKRLLELGNEVIICGRSEARLAEAKQQLPNIHTKQCDVADRSQREALYEWALKEYPNLNVLVNNAGIQKEIDFKKGTEELFVDGDEIELNFQAPVHLSALFTPHLMKQPEAAIVQVTSGLAFNPLAVYPVYCATKAALHSFSLTLRHQLRDTSVEVIEMAPPMVDTGLNQKSRDKQGLTYRGISSEEYVQYFLDGLKEGKQEITNERVEGLRDATRADYDRLFEQMNTQEN.

Leucine 9–isoleucine 33 lines the NADP(+) pocket. Residue serine 139 coordinates substrate. Tyrosine 152 serves as the catalytic Proton acceptor.

Belongs to the short-chain dehydrogenases/reductases (SDR) family.

It localises to the cytoplasm. This is an uncharacterized protein from Bacillus subtilis (strain 168).